We begin with the raw amino-acid sequence, 81 residues long: Prophage excisionase-like protein (81 aa).

To lambdoid phages excisionases.

The polypeptide is Prophage excisionase-like protein (xisE) (Escherichia coli (strain K12)).